Reading from the N-terminus, the 838-residue chain is Semaphorin-4G (838 aa).

An N-terminal signal peptide occupies residues 1 to 17; that stretch reads MWGRLWPLLLSILTATA. The Extracellular segment spans residues 18 to 675; sequence VPGPSLRRPS…GAQLAPDVRL (658 aa). A Sema domain is found at 35–505; the sequence is RMTIPYEELS…APSGVIQLPL (471 aa). Residues N55, N111, and N126 are each glycosylated (N-linked (GlcNAc...) asparagine). A disulfide bond links C104 and C115. Disulfide bonds link C133–C142, C270–C377, and C294–C337. N-linked (GlcNAc...) asparagine glycosylation is present at N388. The PSI domain occupies 507–558; that stretch reads SCSRYRSCYDCILARDPYCGWDPGTHACAAATTIANRTALIQDIERGNRGCE. Disulfide bonds link C508–C525 and C517–C534. Residues N542 and N598 are each glycosylated (N-linked (GlcNAc...) asparagine). Residues 567–649 form the Ig-like C2-type domain; sequence PPLKTRSVLR…RTLLASYSLT (83 aa). A disulfide bond links C584 and C632. Residues 676 to 696 traverse the membrane as a helical segment; it reads LYVLAIAALGGLCLILASSLL. Topologically, residues 697 to 838 are cytoplasmic; it reads YVACLREGRR…LVEQLDESSV (142 aa). The disordered stretch occupies residues 723 to 777; that stretch reads SAVQLQTVSGQCPGEEDEGDDEGAGGLEGSCLQIIPGEGAPAPPPPPPPPPPAEL. Residues 736 to 745 show a composition bias toward acidic residues; that stretch reads GEEDEGDDEG. A compositionally biased stretch (pro residues) spans 763-775; sequence PAPPPPPPPPPPA. Residues S795 and S837 each carry the phosphoserine modification.

The protein belongs to the semaphorin family. As to quaternary structure, interacts with PLXNB2.

It is found in the cell membrane. Functionally, cell surface receptor for PLXNB2. May play a role in axon guidance. The polypeptide is Semaphorin-4G (SEMA4G) (Homo sapiens (Human)).